The sequence spans 692 residues: Vacuolar amino acid transporter 3 (692 aa).

The span at 1-14 (MNGKEVSSGSGRTQ) shows a compositional bias: polar residues. Positions 1 to 71 (MNGKEVSSGS…TGGLLKKPPL (71 aa)) are disordered. A compositionally biased stretch (low complexity) spans 15–24 (SNNNKKNNNG). Polar residues predominate over residues 28-38 (GISHASGSPLT). 3 positions are modified to phosphoserine: serine 59, serine 119, and serine 121. Disordered stretches follow at residues 135–170 (KWTN…SNRK) and 258–294 (DLSE…GRHP). A compositionally biased stretch (low complexity) spans 141–153 (PSSPSQYQYPSQP). Over residues 154-167 (ALSTSIPSQAPSFS) the composition is skewed to polar residues. Position 165 is a phosphoserine (serine 165). A compositionally biased stretch (acidic residues) spans 258–279 (DLSEEEEEEEETEEEPEEEALE). 11 helical membrane-spanning segments follow: residues 302–322 (AVLL…PKAF), 329–349 (FSAL…VSLI), 374–394 (FAIL…YTVF), 412–432 (GSIS…PLSL), 443–463 (ALIA…YSIY), 483–503 (WSLF…LIPI), 519–539 (AVMC…YAAF), 561–581 (VQLL…FPAI), 607–627 (YFRC…ANDL), 630–650 (FVSL…PPLL), and 665–685 (LLLD…TSWQ).

Belongs to the amino acid/polyamine transporter 2 family.

The protein localises to the vacuole membrane. Functionally, involved in amino acid efflux from the vacuole to the cytoplasm. Capable of transporting large neutral amino acids including tyrosine, glutamine, asparagine, isoleucine and leucine. In Saccharomyces cerevisiae (strain ATCC 204508 / S288c) (Baker's yeast), this protein is Vacuolar amino acid transporter 3 (AVT3).